Reading from the N-terminus, the 142-residue chain is HTH-type transcriptional regulator MntR (142 aa).

The 63-residue stretch at 1 to 63 (MPTPSMEDYI…YEKYRGLILT (63 aa)) folds into the HTH dtxR-type domain. Residues D8, E11, H77, E99, E102, and H103 each coordinate Mn(2+).

The protein belongs to the DtxR/MntR family. Homodimer.

It localises to the cytoplasm. With respect to regulation, DNA binding is strongly activated by Mn(2+). Central regulator of manganese homeostasis. The chain is HTH-type transcriptional regulator MntR from Listeria monocytogenes serotype 4b (strain CLIP80459).